The following is a 447-amino-acid chain: MIKIKKGLNLPIAGRPEQVIYDGPVITEVALLGEEYAGMRPSMKVKEGDAVKKGQVLFEDKKNPGVVFTAPVSGKIAAIHRGEKRVLQSVVIAVEGNDEIEFERYAPEALANLSGEEVRRNLIQSGLWTALRTRPFSKIPAVDAEPFAIFVNAMDTNPLAADPVVVIKEAAEDFRRGLLVLSRLTERKIHVCKAAGADVPSENAANIETHEFGGPHPAGLSGTHIHFIEPVGANKTVWTINYQDVIAIGRLFATGRLNTERVIALGGSQVNKPRLLRTVLGAKVSQITAGELVDADNRVISGSVLNGAITQGAHDYLGRYHNQISVIEEGRSKELFGWVAPQPDKYSITRTTLGHFLKNKLFKFTTAVNGGDRAMVPIGTYERVMPLDILPTLLLRDLIVGDTDSAQALGCLELDEEDLALCSFVCPGKYEYGPLLRKVLETIEKEG.

The protein belongs to the NqrA family. In terms of assembly, composed of six subunits; NqrA, NqrB, NqrC, NqrD, NqrE and NqrF.

The catalysed reaction is a ubiquinone + n Na(+)(in) + NADH + H(+) = a ubiquinol + n Na(+)(out) + NAD(+). Functionally, NQR complex catalyzes the reduction of ubiquinone-1 to ubiquinol by two successive reactions, coupled with the transport of Na(+) ions from the cytoplasm to the periplasm. NqrA to NqrE are probably involved in the second step, the conversion of ubisemiquinone to ubiquinol. In Neisseria meningitidis serogroup A / serotype 4A (strain DSM 15465 / Z2491), this protein is Na(+)-translocating NADH-quinone reductase subunit A.